We begin with the raw amino-acid sequence, 186 residues long: NADH-quinone oxidoreductase subunit B (186 aa).

Residues C44, C45, C110, and C139 each contribute to the [4Fe-4S] cluster site.

The protein belongs to the complex I 20 kDa subunit family. As to quaternary structure, NDH-1 is composed of 14 different subunits. Subunits NuoB, C, D, E, F, and G constitute the peripheral sector of the complex. Requires [4Fe-4S] cluster as cofactor.

Its subcellular location is the cell inner membrane. It catalyses the reaction a quinone + NADH + 5 H(+)(in) = a quinol + NAD(+) + 4 H(+)(out). Functionally, NDH-1 shuttles electrons from NADH, via FMN and iron-sulfur (Fe-S) centers, to quinones in the respiratory chain. The immediate electron acceptor for the enzyme in this species is believed to be ubiquinone. Couples the redox reaction to proton translocation (for every two electrons transferred, four hydrogen ions are translocated across the cytoplasmic membrane), and thus conserves the redox energy in a proton gradient. This chain is NADH-quinone oxidoreductase subunit B, found in Leptospira interrogans serogroup Icterohaemorrhagiae serovar copenhageni (strain Fiocruz L1-130).